The sequence spans 117 residues: Large ribosomal subunit protein bL19 (117 aa).

This sequence belongs to the bacterial ribosomal protein bL19 family.

Functionally, this protein is located at the 30S-50S ribosomal subunit interface and may play a role in the structure and function of the aminoacyl-tRNA binding site. The protein is Large ribosomal subunit protein bL19 of Desulfotalea psychrophila (strain LSv54 / DSM 12343).